The chain runs to 346 residues: MSGNNSSLSYKDAGVDIDAGNALVDRIKGAVKRTRRPEVMGGIGGFGALCELPTKYKQPVLVSGTDGVGTKLRLALDMNKHDTIGIDLVAMCVNDLIVQGAEPLFFLDYYATGKLDVDTAADVVSGIADGCVQAGCALIGGETAEMPGMYEGEDYDVAGFCVGVVEKEDVIDGTKVAAGDALIAVGSSGPHSNGYSLIRKILEVSGADKNEELAGRTIGEHLLEPTKIYIKSALKMIEKHDIHAISHITGGGFWENIPRVLPEGTKAVIDGNSWEWPIIFKWLQEKGNVETHEMYRTFNCGVGLVVALPKDQADAAVALLKEEGENAWVIGEIAQAEANEEQVEIN.

Belongs to the AIR synthase family.

Its subcellular location is the cytoplasm. It catalyses the reaction 2-formamido-N(1)-(5-O-phospho-beta-D-ribosyl)acetamidine + ATP = 5-amino-1-(5-phospho-beta-D-ribosyl)imidazole + ADP + phosphate + H(+). It participates in purine metabolism; IMP biosynthesis via de novo pathway; 5-amino-1-(5-phospho-D-ribosyl)imidazole from N(2)-formyl-N(1)-(5-phospho-D-ribosyl)glycinamide: step 2/2. The sequence is that of Phosphoribosylformylglycinamidine cyclo-ligase from Vibrio parahaemolyticus serotype O3:K6 (strain RIMD 2210633).